Consider the following 538-residue polypeptide: MKAFSVTCLGFAVFSSSICVNINILQQIGYIKQQVRQLSYYSQSSSSYIVVKLLPNIQPTDNSCEFKSVTQYNKTLSNLLLPIAENINNIASPSPGSRRHKRFAGIAIGIAALGVATAAQVTAAVSLVQAQTNARAIAAMKNSIQATNRAIFEVKEGTQQLAIAVQAIQDHINTIMNTQLNNMTCQILDNQLATFLGLYLTELTTVFQPQLINPALSPISIQALRSLLGSMTPAVVQATLSTSISAAEILSAGLMEGQIVSVLLDEMQMIVKVNIPTIVTQSNALVIDFYSISSFINNQESIIQLPDRILEIGNEQWSYPAKNCKLTRHHIFCQYNEAERLSLESKLCLAGNISACVFSPIAGSYMRRFVALDGTIVANCRSLTCLCKSPSYPIYQPDHHAVTTIDLTACQTLSLDGLDFSIVSLSNITYAENLTISLSQTINTQPIDISTELSKVNASLQNAVKYIKESNHQLLSVSVNSKIGAIIVTALVLSILSIIISLLFCCWAYIATKEIRRINFKTNHINTISSSVDDLIRY.

The first 19 residues, 1–19, serve as a signal peptide directing secretion; the sequence is MKAFSVTCLGFAVFSSSIC. At 20–482 the chain is on the extracellular side; the sequence is VNINILQQIG…QLLSVSVNSK (463 aa). N-linked (GlcNAc...) asparagine; by host glycans are attached at residues N56 and N73. Residues 103–127 form a fusion peptide region; the sequence is FAGIAIGIAALGVATAAQVTAAVSL. A coiled-coil region spans residues 128–156; the sequence is VQAQTNARAIAAMKNSIQATNRAIFEVKE. N-linked (GlcNAc...) asparagine; by host glycosylation occurs at N182. 4 disulfide bridges follow: C324-C333, C348-C356, C380-C385, and C387-C410. N352 carries an N-linked (GlcNAc...) asparagine; by host glycan. N427, N433, and N457 each carry an N-linked (GlcNAc...) asparagine; by host glycan. A coiled-coil region spans residues 452–477; that stretch reads ELSKVNASLQNAVKYIKESNHQLLSV. Residues 483 to 503 form a helical membrane-spanning segment; sequence IGAIIVTALVLSILSIIISLL. The Cytoplasmic portion of the chain corresponds to 504–538; that stretch reads FCCWAYIATKEIRRINFKTNHINTISSSVDDLIRY.

It belongs to the paramyxoviruses fusion glycoprotein family. Homotrimer; disulfide-linked F1-F2. Interacts with host LAMP1; LAMP2 and LAMP3; these interactions promote the cleavage of the viral fusion protein F. In terms of processing, the inactive precursor F0 is glycosylated and proteolytically cleaved into F1 and F2 to be functionally active. The cleavage is mediated by cellular proteases including host FURIN during the transport and maturation of the polypeptide.

It localises to the virion membrane. The protein localises to the host cell membrane. Its function is as follows. Class I viral fusion protein. Under the current model, the protein has at least 3 conformational states: pre-fusion native state, pre-hairpin intermediate state, and post-fusion hairpin state. During viral and plasma cell membrane fusion, the heptad repeat (HR) regions assume a trimer-of-hairpins structure, positioning the fusion peptide in close proximity to the C-terminal region of the ectodomain. The formation of this structure appears to drive apposition and subsequent fusion of viral and plasma cell membranes. Directs fusion of viral and cellular membranes leading to delivery of the nucleocapsid into the cytoplasm. This fusion is pH independent and occurs directly at the outer cell membrane. The trimer of F1-F2 (F protein) probably interacts with HN at the virion surface. Upon HN binding to its cellular receptor, the hydrophobic fusion peptide is unmasked and interacts with the cellular membrane, inducing the fusion between cell and virion membranes. Later in infection, F proteins expressed at the plasma membrane of infected cells could mediate fusion with adjacent cells to form syncytia, a cytopathic effect that could lead to tissue necrosis. This Homo sapiens (Human) protein is Fusion glycoprotein F0 (F).